Consider the following 213-residue polypeptide: MIDISRQLTPSHPNWPGDAPFRVKPGARIAQGDSVNTGELCTSTHTGTHVDAPWHYSETGARLEEVELNRYVGRCRVVTVRAEGGLIPAAALAGLPKRLPPRLLLHTGQPAHWTEFPEDFAALDPALIREAARRGVRLIGTDSPSVDPLTSKTLDAHHACLETDTLILEGLNLAEVPDGEYDLVCLPLPLAEVDGAPARAILLPAGTLPEGEG.

Tryptophan 15 is a substrate binding site. Positions 45, 49, and 51 each coordinate Zn(2+). Histidine 55 acts as the Proton donor/acceptor in catalysis. Zn(2+)-binding residues include histidine 157 and glutamate 169.

It belongs to the Cyclase 1 superfamily. KynB family. As to quaternary structure, homodimer. Zn(2+) is required as a cofactor.

The catalysed reaction is N-formyl-L-kynurenine + H2O = L-kynurenine + formate + H(+). Its pathway is amino-acid degradation; L-tryptophan degradation via kynurenine pathway; L-kynurenine from L-tryptophan: step 2/2. Catalyzes the hydrolysis of N-formyl-L-kynurenine to L-kynurenine, the second step in the kynurenine pathway of tryptophan degradation. This Deinococcus geothermalis (strain DSM 11300 / CIP 105573 / AG-3a) protein is Kynurenine formamidase.